The following is a 109-amino-acid chain: Small ribosomal subunit protein uS17 (109 aa).

It belongs to the universal ribosomal protein uS17 family. As to quaternary structure, part of the 30S ribosomal subunit.

In terms of biological role, one of the primary rRNA binding proteins, it binds specifically to the 5'-end of 16S ribosomal RNA. The protein is Small ribosomal subunit protein uS17 of Methanococcus maripaludis (strain DSM 14266 / JCM 13030 / NBRC 101832 / S2 / LL).